The chain runs to 387 residues: Odorant receptor 94a (387 aa).

Over 1–45 (MDKHKDRIESMRLILQVMQLFGLWPWSLKSEEEWTFTGFVKRNYR) the chain is Cytoplasmic. A helical membrane pass occupies residues 46-66 (FLLHLPITFTFIGLMWLEAFI). The Extracellular portion of the chain corresponds to 67–75 (SSNLEQAGQ). Residues 76–96 (VLYMSITEMALVVKILSIWHY) form a helical membrane-spanning segment. Residues 97 to 133 (RTEAWRLMYELQHAPDYQLHNQEEVDFWRREQRFFKW) are Cytoplasmic-facing. Residues 134-154 (FFYIYILISLGVVYSGCTGVL) form a helical membrane-spanning segment. Residues 155-191 (FLEGYELPFAYYVPFEWQNERRYWFAYGYDMAGMTLT) are Extracellular-facing. A helical transmembrane segment spans residues 192–212 (CISNITLDTLGCYFLFHISLL). The Cytoplasmic segment spans residues 213-255 (YRLLGLRLRETKNMKNDTIFGQQLRAIFIMHQRIRSLTLTCQR). Residues 256–276 (IVSPYILSQIILSALIICFSG) traverse the membrane as a helical segment. Topologically, residues 277 to 290 (YRLQHVGIRDNPGQ) are extracellular. The chain crosses the membrane as a helical span at residues 291–311 (FISMLQFVSVMILQIYLPCYY). The Cytoplasmic segment spans residues 312–362 (GNEITVYANQLTNEVYHTNWLECRPPIRKLLNAYMEHLKKPVTIRAGNFFA). The chain crosses the membrane as a helical span at residues 363–383 (VGLPIFVKTINNAYSFLALLL). N-linked (GlcNAc...) asparagine glycosylation occurs at Asn384. The Extracellular portion of the chain corresponds to 384–387 (NVSN).

This sequence belongs to the insect chemoreceptor superfamily. Heteromeric odorant receptor channel (TC 1.A.69) family. Or2a subfamily. Interacts with Orco. Complexes exist early in the endomembrane system in olfactory sensory neurons (OSNs), coupling these complexes to the conserved ciliary trafficking pathway.

The protein resides in the cell membrane. Odorant receptor which mediates acceptance or avoidance behavior, depending on its substrates. The odorant receptor repertoire encodes a large collection of odor stimuli that vary widely in identity, intensity, and duration. May form a complex with Orco to form odorant-sensing units, providing sensitive and prolonged odorant signaling and calcium permeability. The protein is Odorant receptor 94a (Or94a) of Drosophila melanogaster (Fruit fly).